We begin with the raw amino-acid sequence, 339 residues long: Annexin A2 (339 aa).

At Ser2 the chain carries N-acetylserine. An S100A10-binding site region spans residues Ser2–Tyr24. Tyr24 bears the Phosphotyrosine; by SRC mark. Phosphoserine; by PKC is present on Ser26. 2 Annexin repeats span residues Phe33–Lys104 and Thr105–Lys176. Lys49 bears the N6-acetyllysine; alternate mark. Residue Lys49 forms a Glycyl lysine isopeptide (Lys-Gly) (interchain with G-Cter in SUMO1); alternate linkage. Lys49 participates in a covalent cross-link: Glycyl lysine isopeptide (Lys-Gly) (interchain with G-Cter in SUMO2); alternate. An N6-acetyllysine modification is found at Lys152. The residue at position 184 (Ser184) is a Phosphoserine. 2 Annexin repeats span residues Glu189–Gln261 and Asn265–Gly336. Tyr199 bears the Phosphotyrosine mark. Lys227 carries the N6-acetyllysine modification.

It belongs to the annexin family. As to quaternary structure, heterotetramer containing 2 light chains of S100A10/p11 and 2 heavy chains of ANXA2/p36. Interacts with ATP1B1. Interacts with DYSF. Interacts with COCH. Interacts (via repeat Annexin 1) with PCSK9 (via the C-terminal domain); the interaction inhibits the degradation of LDLR. Interacts with CEACAM1 (via the cytoplasmic domain); this interaction is regulated by phosphorylation of CEACAM1. Interacts with APPL2 and APPL1; targets APPL2 to endosomes and acting in parallel to RAB5A. Interacts with S100A4. May interact with UBAP2. Interacts with PLEKHG4B; this interaction is required for PLEKHG4B localization to cell-cell adhesions. In terms of processing, ISGylated.

The protein localises to the secreted. It localises to the extracellular space. It is found in the extracellular matrix. Its subcellular location is the basement membrane. The protein resides in the melanosome. Its function is as follows. Calcium-regulated membrane-binding protein whose affinity for calcium is greatly enhanced by anionic phospholipids. It binds two calcium ions with high affinity. May be involved in heat-stress response. Inhibits PCSK9-enhanced LDLR degradation, probably reduces PCSK9 protein levels via a translational mechanism but also competes with LDLR for binding with PCSK9. Binds to endosomes damaged by phagocytosis of particulate wear debris and participates in endosomal membrane stabilization, thereby limiting NLRP3 inflammasome activation. Required for endothelial cell surface plasmin generation and may support fibrinolytic surveillance and neoangiogenesis. The polypeptide is Annexin A2 (ANXA2) (Bos taurus (Bovine)).